The chain runs to 156 residues: MKLQLIAVGTKMPDWIQAGFTDYLRRFPKDMPFDLIEIPAGKRGKNADIKRILEKEGEQMLAAVSKGSRIVTLDIPGSRWETPQLAQQLEHWKRDGRDVSLLIGGPEGLAPACKAAAEQSWSLSPLTLPHPLVRVLVAESLYRAWSITTNHPYHRE.

S-adenosyl-L-methionine contacts are provided by residues L73, G104, and 123–128 (LSPLTL).

Belongs to the RNA methyltransferase RlmH family. In terms of assembly, homodimer.

It is found in the cytoplasm. The catalysed reaction is pseudouridine(1915) in 23S rRNA + S-adenosyl-L-methionine = N(3)-methylpseudouridine(1915) in 23S rRNA + S-adenosyl-L-homocysteine + H(+). Specifically methylates the pseudouridine at position 1915 (m3Psi1915) in 23S rRNA. This Photorhabdus laumondii subsp. laumondii (strain DSM 15139 / CIP 105565 / TT01) (Photorhabdus luminescens subsp. laumondii) protein is Ribosomal RNA large subunit methyltransferase H.